We begin with the raw amino-acid sequence, 166 residues long: Small ribosomal subunit protein uS5 (166 aa).

Positions 12–75 constitute an S5 DRBM domain; it reads YIEKLVQVNR…EAARRNMIQV (64 aa).

The protein belongs to the universal ribosomal protein uS5 family. In terms of assembly, part of the 30S ribosomal subunit. Contacts proteins S4 and S8.

Functionally, with S4 and S12 plays an important role in translational accuracy. Its function is as follows. Located at the back of the 30S subunit body where it stabilizes the conformation of the head with respect to the body. In Pseudomonas aeruginosa (strain LESB58), this protein is Small ribosomal subunit protein uS5.